We begin with the raw amino-acid sequence, 572 residues long: Linalool synthase TPS2, chloroplastic (572 aa).

The N-terminal 27 residues, 1–27 (EVEEPKTKISASTAEASSSRISSAKMT), are a transit peptide targeting the chloroplast. Residues 1 to 45 (EVEEPKTKISASTAEASSSRISSAKMTADGTIKLGDQSPLKQSEK) are disordered. Residues 8–28 (KISASTAEASSSRISSAKMTA) are compositionally biased toward low complexity. 5 residues coordinate (2E)-geranyl diphosphate: Arg284, Asp321, Asp325, Arg462, and Asn465. 2 residues coordinate Mg(2+): Asp321 and Asp325. The DDXXD motif motif lies at 321 to 325 (DDVYD). 3 residues coordinate Mg(2+): Asn465, Thr469, and Ser473.

This sequence belongs to the terpene synthase family. Tpsb subfamily. In terms of assembly, monomer. Mg(2+) is required as a cofactor. The cofactor is Mn(2+). In terms of tissue distribution, expressed in flowers and fruits.

Its subcellular location is the plastid. The protein localises to the chloroplast. It catalyses the reaction (2E)-geranyl diphosphate = beta-myrcene + diphosphate. It carries out the reaction (2E)-geranyl diphosphate + H2O = linalool + diphosphate. The catalysed reaction is (2E)-geranyl diphosphate = (Z)-beta-ocimene + diphosphate. The enzyme catalyses (2E)-geranyl diphosphate = (E)-beta-ocimene + diphosphate. It functions in the pathway secondary metabolite biosynthesis; terpenoid biosynthesis. Its function is as follows. Monoterpene synthase (mono-TPS) involved in the biosynthesis of monoterpenes natural products, constituent of coffee beverage aroma. Catalyzes the conversion of (2E)-geranyl diphosphate (GPP) into linalool and beta-myrcene, and, as minor products, cis-ocimene and trans-ocimene. Not able to use geranylgeranyl pyrophosphate (GGPP) and farnesyl pyrophosphate (FPP) as substrates. This chain is Linalool synthase TPS2, chloroplastic, found in Coffea arabica (Arabian coffee).